The chain runs to 427 residues: 3-phosphoshikimate 1-carboxyvinyltransferase (427 aa).

3-phosphoshikimate is bound by residues K22, S23, and R27. Position 22 (K22) interacts with phosphoenolpyruvate. Phosphoenolpyruvate-binding residues include G94 and R122. 3-phosphoshikimate-binding residues include S165, Q167, D313, and K340. Residue Q167 coordinates phosphoenolpyruvate. D313 acts as the Proton acceptor in catalysis. R344 and R386 together coordinate phosphoenolpyruvate.

The protein belongs to the EPSP synthase family. As to quaternary structure, monomer.

The protein resides in the cytoplasm. It catalyses the reaction 3-phosphoshikimate + phosphoenolpyruvate = 5-O-(1-carboxyvinyl)-3-phosphoshikimate + phosphate. It functions in the pathway metabolic intermediate biosynthesis; chorismate biosynthesis; chorismate from D-erythrose 4-phosphate and phosphoenolpyruvate: step 6/7. Functionally, catalyzes the transfer of the enolpyruvyl moiety of phosphoenolpyruvate (PEP) to the 5-hydroxyl of shikimate-3-phosphate (S3P) to produce enolpyruvyl shikimate-3-phosphate and inorganic phosphate. This Koribacter versatilis (strain Ellin345) protein is 3-phosphoshikimate 1-carboxyvinyltransferase.